A 308-amino-acid polypeptide reads, in one-letter code: UDP-N-acetylenolpyruvoylglucosamine reductase 2 (308 aa).

Residues Arg31–Ala197 form the FAD-binding PCMH-type domain. Arg176 is a catalytic residue. Catalysis depends on Ser226, which acts as the Proton donor. The active site involves Glu296.

Belongs to the MurB family. FAD is required as a cofactor.

The protein localises to the cytoplasm. It catalyses the reaction UDP-N-acetyl-alpha-D-muramate + NADP(+) = UDP-N-acetyl-3-O-(1-carboxyvinyl)-alpha-D-glucosamine + NADPH + H(+). It participates in cell wall biogenesis; peptidoglycan biosynthesis. Its function is as follows. Cell wall formation. The chain is UDP-N-acetylenolpyruvoylglucosamine reductase 2 from Symbiobacterium thermophilum (strain DSM 24528 / JCM 14929 / IAM 14863 / T).